The following is a 1057-amino-acid chain: Carbamoyl phosphate synthase large chain (1057 aa).

Residues 1–401 form a carboxyphosphate synthetic domain region; sequence MPKRNDIKTI…SLLKAIRSLE (401 aa). ATP is bound by residues R129, R169, G175, G176, K208, I210, E215, G241, I242, H243, Q284, and E298. The ATP-grasp 1 domain maps to 133–327; that stretch reads RTLMNDLNVP…IAKLAAKIAV (195 aa). Residues Q284, E298, and N300 each contribute to the Mg(2+) site. 3 residues coordinate Mn(2+): Q284, E298, and N300. Residues 402–546 form an oligomerization domain region; it reads YGVHHLGLPN…YGTYETENES (145 aa). The carbamoyl phosphate synthetic domain stretch occupies residues 547–929; sequence IVTDKEKILV…ALFKGLTGSG (383 aa). The 191-residue stretch at 671 to 861 folds into the ATP-grasp 2 domain; that stretch reads EALLRKINVP…MAQLAMRAII (191 aa). The ATP site is built by R707, R746, L748, E752, G777, V778, H779, S780, Q820, and E832. 3 residues coordinate Mg(2+): Q820, E832, and N834. Q820, E832, and N834 together coordinate Mn(2+). The MGS-like domain occupies 930-1057; that stretch reads VEVKDHGTVL…ESMTFTMRQM (128 aa). Positions 930–1057 are allosteric domain; the sequence is VEVKDHGTVL…ESMTFTMRQM (128 aa).

It belongs to the CarB family. Composed of two chains; the small (or glutamine) chain promotes the hydrolysis of glutamine to ammonia, which is used by the large (or ammonia) chain to synthesize carbamoyl phosphate. Tetramer of heterodimers (alpha,beta)4. Requires Mg(2+) as cofactor. It depends on Mn(2+) as a cofactor.

It carries out the reaction hydrogencarbonate + L-glutamine + 2 ATP + H2O = carbamoyl phosphate + L-glutamate + 2 ADP + phosphate + 2 H(+). The enzyme catalyses hydrogencarbonate + NH4(+) + 2 ATP = carbamoyl phosphate + 2 ADP + phosphate + 2 H(+). Its pathway is amino-acid biosynthesis; L-arginine biosynthesis; carbamoyl phosphate from bicarbonate: step 1/1. The protein operates within pyrimidine metabolism; UMP biosynthesis via de novo pathway; (S)-dihydroorotate from bicarbonate: step 1/3. Functionally, large subunit of the glutamine-dependent carbamoyl phosphate synthetase (CPSase). CPSase catalyzes the formation of carbamoyl phosphate from the ammonia moiety of glutamine, carbonate, and phosphate donated by ATP, constituting the first step of 2 biosynthetic pathways, one leading to arginine and/or urea and the other to pyrimidine nucleotides. The large subunit (synthetase) binds the substrates ammonia (free or transferred from glutamine from the small subunit), hydrogencarbonate and ATP and carries out an ATP-coupled ligase reaction, activating hydrogencarbonate by forming carboxy phosphate which reacts with ammonia to form carbamoyl phosphate. This is Carbamoyl phosphate synthase large chain from Staphylococcus aureus (strain MW2).